The chain runs to 648 residues: Biosynthetic arginine decarboxylase (648 aa).

Lys-109 bears the N6-(pyridoxal phosphate)lysine mark. Residue 291-301 (LDVGGGLGVDY) coordinates substrate.

The protein belongs to the Orn/Lys/Arg decarboxylase class-II family. SpeA subfamily. It depends on Mg(2+) as a cofactor. Pyridoxal 5'-phosphate is required as a cofactor.

It catalyses the reaction L-arginine + H(+) = agmatine + CO2. Catalyzes the biosynthesis of agmatine from arginine. The protein is Biosynthetic arginine decarboxylase of Prochlorococcus marinus (strain SARG / CCMP1375 / SS120).